Here is a 647-residue protein sequence, read N- to C-terminus: Denticleless protein homolog (647 aa).

7 WD repeats span residues 48–88 (AAAV…KQSS), 95–134 (AHDN…LLGT), 137–177 (GHQC…KDGF), 209–248 (DSQQ…TAYH), 264–303 (TRKL…TTPV), 308–349 (GHSN…QAPM), and 353–393 (GHSQ…EGEN). 2 consecutive short sequence motifs (DDB1-binding motif) follow at residues 167 to 170 (WDTR) and 238 to 241 (WDLR). 2 disordered regions span residues 410–487 (QSPN…SKSP) and 534–647 (KRSR…RTQD). Polar residues-rich tracts occupy residues 426-443 (PSKN…SPQP) and 471-486 (KMPS…SSKS). Over residues 543–558 (LKKEDSFGLESEKRLG) the composition is skewed to basic and acidic residues. Positions 586-600 (KGSAQPKSPSSGSSQ) are enriched in low complexity.

The protein belongs to the WD repeat cdt2 family. In terms of assembly, component of the DCX(DTL) E3 ubiquitin ligase complex, at least composed of cul4 (cul4a or cul4b), ddb1, dtl/cdt2 and rbx1.

The protein resides in the nucleus. Its subcellular location is the cytoplasm. It localises to the cytoskeleton. It is found in the microtubule organizing center. The protein localises to the centrosome. The protein resides in the chromosome. Its pathway is protein modification; protein ubiquitination. Substrate-specific adapter of a DCX (DDB1-CUL4-X-box) E3 ubiquitin-protein ligase complex required for cell cycle control, DNA damage response and translesion DNA synthesis. The DCX(DTL) complex, also named CRL4(CDT2) complex, mediates the polyubiquitination and subsequent degradation of CDT1, CDKN1A/p21(CIP1), KMT5A and SDE2. CDT1 degradation in response to DNA damage is necessary to ensure proper cell cycle regulation of DNA replication. CDKN1A/p21(CIP1) degradation during S phase or following UV irradiation is essential to control replication licensing. KMT5A degradation is also important for a proper regulation of mechanisms such as TGF-beta signaling, cell cycle progression, DNA repair and cell migration. Most substrates require their interaction with PCNA for their polyubiquitination: substrates interact with PCNA via their PIP-box, and those containing the 'K+4' motif in the PIP box, recruit the DCX(DTL) complex, leading to their degradation. In undamaged proliferating cells, the DCX(DTL) complex also promotes the 'Lys-164' monoubiquitination of PCNA, thereby being involved in PCNA-dependent translesion DNA synthesis. May play a role in the regulation of the circadian clock. In Danio rerio (Zebrafish), this protein is Denticleless protein homolog (dtl).